Reading from the N-terminus, the 97-residue chain is Large ribosomal subunit protein bL28 (97 aa).

This sequence belongs to the bacterial ribosomal protein bL28 family.

The protein is Large ribosomal subunit protein bL28 of Rickettsia africae (strain ESF-5).